We begin with the raw amino-acid sequence, 283 residues long: SNAP25 homologous protein SNAP32 (283 aa).

Disordered regions lie at residues Met-1–Arg-64 and Leu-192–Ser-212. A compositionally biased stretch (polar residues) spans Pro-198 to Ser-212. A t-SNARE coiled-coil homology domain is found at Glu-218–Leu-280.

The protein belongs to the SNAP-25 family. In terms of assembly, interacts with SYP121. In terms of tissue distribution, expressed in roots, culms and leaves.

It is found in the membrane. Functionally, t-SNARE involved in diverse vesicle trafficking and membrane fusion processes. May be involved in resistance to the rice blast fungus Magnaporthe oryzae. May contribute to host resistance to rice blast through interaction with SYP121. This Oryza sativa subsp. japonica (Rice) protein is SNAP25 homologous protein SNAP32.